Here is a 505-residue protein sequence, read N- to C-terminus: Prenylcysteine oxidase 1 (505 aa).

Positions 1–27 are cleaved as a signal peptide; it reads MGRVVAELVSSLLGLWLLLCSCGCPEG. Residues N196, N323, and N353 are each glycosylated (N-linked (GlcNAc...) asparagine).

This sequence belongs to the prenylcysteine oxidase family. FAD serves as cofactor. Widely expressed.

The protein localises to the lysosome. The catalysed reaction is an S-polyprenyl-L-cysteine + O2 + H2O = a polyprenal + L-cysteine + H2O2. It carries out the reaction S-(2E,6E)-farnesyl-L-cysteine + O2 + H2O = (2E,6E)-farnesal + L-cysteine + H2O2. The enzyme catalyses [(2E,6E,10E)-geranylgeranyl]-L-cysteine + O2 + H2O = (2E,6E,10E)-geranylgeranial + L-cysteine + H2O2. In terms of biological role, prenylcysteine oxidase that cleaves the thioether bond of prenyl-L-cysteines, such as farnesylcysteine and geranylgeranylcysteine. Only active against free prenylcysteines and not prenylcysteine residues within prenylated proteins or peptides. Involved in the final step in the degradation of prenylated proteins, by degrading prenylcysteines after the protein has been degraded. This chain is Prenylcysteine oxidase 1, found in Homo sapiens (Human).